Here is a 222-residue protein sequence, read N- to C-terminus: Lipid transferase CIDEC (222 aa).

Over residues 1 to 19 (MAMYTAVSTSVVTQQQLSE) the composition is skewed to polar residues. 2 disordered regions span residues 1-33 (MAMYTAVSTSVVTQQQLSEPSAEAPRARPCRVT) and 203-222 (EQPPKSKAASLIPTSLKMLQ). The segment at 1-33 (MAMYTAVSTSVVTQQQLSEPSAEAPRARPCRVT) is required for liquid-liquid phase separation (LLPS). A CIDE-N domain is found at 26-103 (RARPCRVTTA…VLHKGQKWQP (78 aa)).

This sequence belongs to the CIDE family. As to quaternary structure, homodimer. Homooligomer; undergoes liquid-liquid phase separation (LLPS) via its N-terminus, facilitating lipid droplet fusion, occurs at the lipid droplet contact sites. Interacts with CIDEA. Interacts with PLIN1. Interacts with NFAT5; this interaction is direct and retains NFAT5 in the cytoplasm. Interacts with CEBPB. Interacts with isoform CLSTN3beta of CLSTN3; inhibiting the lipid transferase activity of CIDEC. Post-translationally, ubiquitinated and targeted to proteasomal degradation, resulting in a short half-life (about 15 minutes in 3T3-L1 cells). Protein stability depends on triaclyglycerol synthesis, fatty acid availability and lipid droplet formation.

It localises to the lipid droplet. Its subcellular location is the endoplasmic reticulum. The protein resides in the nucleus. It catalyses the reaction a triacyl-sn-glycerol(in) = a triacyl-sn-glycerol(out). Functionally, lipid transferase specifically expressed in white adipose tissue, which promotes unilocular lipid droplet formation by mediating lipid droplet fusion. Lipid droplet fusion promotes their enlargement, restricting lipolysis and favoring lipid storage. Localizes on the lipid droplet surface, at focal contact sites between lipid droplets, and mediates atypical lipid droplet fusion by undergoing liquid-liquid phase separation (LLPS) and promoting directional net neutral lipid transfer from the smaller to larger lipid droplets. The transfer direction may be driven by the internal pressure difference between the contacting lipid droplet pair. Its role in neutral lipid transfer and lipid droplet enlargement is activated by the interaction with PLIN1. May also act as a CEBPB coactivator in the white adipose tissue to control the expression of a subset of CEBPB downstream target genes, including SOCS1, SOCS3, TGFB1, TGFBR1, ID2 and XDH. When overexpressed in preadipocytes, induces apoptosis or increases cell susceptibility to apoptosis induced by serum deprivation or TGFB treatment. The protein is Lipid transferase CIDEC of Bos taurus (Bovine).